Reading from the N-terminus, the 357-residue chain is Histidinol-phosphate aminotransferase (357 aa).

An N6-(pyridoxal phosphate)lysine modification is found at K212.

It belongs to the class-II pyridoxal-phosphate-dependent aminotransferase family. Histidinol-phosphate aminotransferase subfamily. Homodimer. Pyridoxal 5'-phosphate is required as a cofactor.

The enzyme catalyses L-histidinol phosphate + 2-oxoglutarate = 3-(imidazol-4-yl)-2-oxopropyl phosphate + L-glutamate. The protein operates within amino-acid biosynthesis; L-histidine biosynthesis; L-histidine from 5-phospho-alpha-D-ribose 1-diphosphate: step 7/9. This is Histidinol-phosphate aminotransferase from Pectobacterium carotovorum subsp. carotovorum (strain PC1).